We begin with the raw amino-acid sequence, 177 residues long: Probable DNA-directed RNA polymerase subunit delta (177 aa).

The region spanning 14–81 is the HTH HARE-type domain; it reads CSMIEVVHSV…GENRWGLRSW (68 aa). Positions 91-177 are disordered; sequence ILPQPKPKKK…DETEEEEEEL (87 aa). Positions 106–177 are enriched in acidic residues; it reads DGFDDYIEED…DETEEEEEEL (72 aa).

It belongs to the RpoE family. As to quaternary structure, RNAP is composed of a core of 2 alpha, a beta and a beta' subunits. The core is associated with a delta subunit and one of several sigma factors.

Functionally, participates in both the initiation and recycling phases of transcription. In the presence of the delta subunit, RNAP displays an increased specificity of transcription, a decreased affinity for nucleic acids, and an increased efficiency of RNA synthesis because of enhanced recycling. The polypeptide is Probable DNA-directed RNA polymerase subunit delta (Bacillus cereus (strain G9842)).